Consider the following 420-residue polypeptide: Acetyl-CoA acetyltransferase B, mitochondrial (420 aa).

The transit peptide at 1-33 directs the protein to the mitochondrion; the sequence is MAFCGPRTAARLSHSTRALHYTHRSFASPRTLN. Residue Cys119 is the Acyl-thioester intermediate of the active site. CoA-binding positions include Tyr212, 251-253, and Lys256; that span reads RVD. Tyr212 provides a ligand contact to K(+). Ala273 and Ala274 together coordinate K(+). Ser277 contributes to the CoA binding site. Val374 contacts K(+). Cys406 acts as the Proton donor/acceptor in catalysis.

It belongs to the thiolase-like superfamily. Thiolase family. In terms of assembly, homotetramer.

Its subcellular location is the mitochondrion. The catalysed reaction is 2 acetyl-CoA = acetoacetyl-CoA + CoA. It carries out the reaction propanoyl-CoA + acetyl-CoA = 2-methyl-3-oxobutanoyl-CoA + CoA. It functions in the pathway lipid metabolism; fatty acid beta-oxidation. Its function is as follows. This is one of the enzymes that catalyzes the last step of the mitochondrial beta-oxidation pathway, an aerobic process breaking down fatty acids into acetyl-CoA. Using free coenzyme A/CoA, catalyzes the thiolytic cleavage of medium- to long-chain 3-oxoacyl-CoAs into acetyl-CoA and a fatty acyl-CoA shortened by two carbon atoms. The activity of the enzyme is reversible and it can also catalyze the condensation of two acetyl-CoA molecules into acetoacetyl-CoA. Thereby, it plays a major role in ketone body metabolism. The sequence is that of Acetyl-CoA acetyltransferase B, mitochondrial (acat1-b) from Xenopus laevis (African clawed frog).